The sequence spans 394 residues: CLKTLSVFLAAFAAADARAVFKTQGHKNSEMIPDNYIVVMKDGVSQDDFKAHVSSVASIHSTNKAKRGTNTEGMKREFDIMNWRGYHGHFDRDTLEEILNDSKVDYVEQDQVVRISGLVTQRGAPSWGLGRVSHRQAGSRDYVFDDSAGRGVTIYGVDTGIDINHQDFRGRARWGTNTADRDNADRHGHGTHTASTFAGTAYGIAKNANIVAVKVLSSDGSGSTSGIIAGINYCVQDAQQRGILGKAAMNLSLGGGFSQANNDAVTRAQNAGIFVAVAAGNDNRDARNYSPASAPAVCTVASSTINDSKSSFSNWGPVVDIYAPGSDIIAARPGGGSTTMSGTSMASPHVAGMGAYMIGLGADPRSLCDRLKQLATPAIRNPGSSTTNRLLYNG.

The signal sequence occupies residues 1 to 17 (CLKTLSVFLAAFAAADA). Positions 18–116 (RAVFKTQGHK…VEQDQVVRIS (99 aa)) are excised as a propeptide. An Inhibitor I9 domain is found at 36-115 (YIVVMKDGVS…YVEQDQVVRI (80 aa)). Residue Asn-100 is glycosylated (N-linked (GlcNAc...) asparagine). Residues 126-394 (SWGLGRVSHR…STTNRLLYNG (269 aa)) form the Peptidase S8 domain. Active-site charge relay system residues include Asp-158 and His-189. Residues Asn-250 and Asn-306 are each glycosylated (N-linked (GlcNAc...) asparagine). Ser-344 functions as the Charge relay system in the catalytic mechanism.

Belongs to the peptidase S8 family.

It is found in the secreted. Functionally, secreted subtilisin-like serine protease with keratinolytic activity that contributes to pathogenicity. The chain is Subtilisin-like protease 4 (SUB4) from Trichophyton equinum (Horse ringworm fungus).